The following is a 47-amino-acid chain: MKKIRWVILIIVLIACVILWTQTINVMCDQDVQFFSGICAINQFIPW.

The chain crosses the membrane as a helical span at residues 6–26 (WVILIIVLIACVILWTQTINV).

This sequence belongs to the MgrB family. As to quaternary structure, may form homooligomers. Probably interacts with the periplasmic domain of PhoQ.

The protein resides in the cell inner membrane. In terms of biological role, phoP-regulated transcription is redox-sensitive, being activated when the periplasm becomes more reducing. MgrB acts between DsbA/DsbB and PhoP/PhoQ in this pathway. Represses PhoP/PhoQ signaling, possibly by binding to the periplasmic domain of PhoQ, altering its activity and that of downstream effector PhoP. This Enterobacter sp. (strain 638) protein is PhoP/PhoQ regulator MgrB.